The following is an 803-amino-acid chain: Phosphoribosylformylglycinamidine synthase subunit PurL (803 aa).

Residue His-65 is part of the active site. Tyr-68 and Lys-107 together coordinate ATP. Glu-109 provides a ligand contact to Mg(2+). Substrate-binding positions include 110–113 (SHNH) and Arg-132. His-111 functions as the Proton acceptor in the catalytic mechanism. Asp-133 contributes to the Mg(2+) binding site. Substrate is bound at residue Gln-256. Asp-284 provides a ligand contact to Mg(2+). 328-330 (ESQ) serves as a coordination point for substrate. 2 residues coordinate ATP: Asn-537 and Gly-574. Asn-575 provides a ligand contact to Mg(2+). Ser-577 contributes to the substrate binding site.

Belongs to the FGAMS family. In terms of assembly, monomer. Part of the FGAM synthase complex composed of 1 PurL, 1 PurQ and 2 PurS subunits.

The protein resides in the cytoplasm. It catalyses the reaction N(2)-formyl-N(1)-(5-phospho-beta-D-ribosyl)glycinamide + L-glutamine + ATP + H2O = 2-formamido-N(1)-(5-O-phospho-beta-D-ribosyl)acetamidine + L-glutamate + ADP + phosphate + H(+). It functions in the pathway purine metabolism; IMP biosynthesis via de novo pathway; 5-amino-1-(5-phospho-D-ribosyl)imidazole from N(2)-formyl-N(1)-(5-phospho-D-ribosyl)glycinamide: step 1/2. Part of the phosphoribosylformylglycinamidine synthase complex involved in the purines biosynthetic pathway. Catalyzes the ATP-dependent conversion of formylglycinamide ribonucleotide (FGAR) and glutamine to yield formylglycinamidine ribonucleotide (FGAM) and glutamate. The FGAM synthase complex is composed of three subunits. PurQ produces an ammonia molecule by converting glutamine to glutamate. PurL transfers the ammonia molecule to FGAR to form FGAM in an ATP-dependent manner. PurS interacts with PurQ and PurL and is thought to assist in the transfer of the ammonia molecule from PurQ to PurL. This chain is Phosphoribosylformylglycinamidine synthase subunit PurL, found in Prochlorococcus marinus (strain NATL1A).